Reading from the N-terminus, the 104-residue chain is Class I hydrophobin 4 (104 aa).

The first 16 residues, 1–16 (MFASTVFVSLLAVAAA), serve as a signal peptide directing secretion. Intrachain disulfides connect C26–C85, C34–C79, C35–C61, and C86–C99.

The protein belongs to the fungal hydrophobin family. In terms of assembly, self-assembles to form functional amyloid fibrils called rodlets. Self-assembly into fibrillar rodlets occurs spontaneously at hydrophobic:hydrophilic interfaces and the rodlets further associate laterally to form amphipathic monolayers.

It is found in the secreted. The protein resides in the cell wall. Functionally, aerial growth, conidiation, and dispersal of filamentous fungi in the environment rely upon a capability of their secreting small amphipathic proteins called hydrophobins (HPBs) with low sequence identity. Class I can self-assemble into an outermost layer of rodlet bundles on aerial cell surfaces, conferring cellular hydrophobicity that supports fungal growth, development and dispersal; whereas Class II form highly ordered films at water-air interfaces through intermolecular interactions but contribute nothing to the rodlet structure. HYD4 is a class I hydrophobin that negatively regulates aerial mycelial growth, conidiation, carotenoid and adenosine synthesis, resistance to oxidant stress, and fruiting body development. Seems not to be involved in the mycelial growth rate, the hydrophobicity of the mycelia and conidia, nor the conidial virulence on silkworm pupae. The sequence is that of Class I hydrophobin 4 from Cordyceps militaris (Caterpillar fungus).